The sequence spans 342 residues: Trace amine-associated receptor 8 (342 aa).

Residues 1–31 (MTSNFSQPVVQLCYEDVNGSCIETPYSPGSR) lie on the Extracellular side of the membrane. Residues Asn-4 and Asn-18 are each glycosylated (N-linked (GlcNAc...) asparagine). Disulfide bonds link Cys-21–Cys-185 and Cys-104–Cys-189. Residues 32 to 52 (VILYTAFSFGSLLAVFGNLLV) traverse the membrane as a helical segment. At 53 to 67 (MTSVLHFKQLHSPTN) the chain is on the cytoplasmic side. A helical membrane pass occupies residues 68–88 (FLIASLACADFLVGVTVMLFS). Residues 89–111 (MVRTVESCWYFGAKFCTLHSCCD) lie on the Extracellular side of the membrane. Residues 112 to 132 (VAFCYSSVLHLCFICIDRYIV) traverse the membrane as a helical segment. At 133-146 (VTDPLVYATKFTVS) the chain is on the cytoplasmic side. The chain crosses the membrane as a helical span at residues 147–167 (VSGICISVSWILPLTYSGAVF). Over 168 to 195 (YTGVNDDGLEELVSALNCVGGCQIIVSQ) the chain is Extracellular. The helical transmembrane segment at 196–216 (GWVLIDFLLFFIPTLVMIILY) threads the bilayer. Topologically, residues 217–258 (SKIFLIAKQQAIKIETTSSKVESSSESYKIRVAKRERKAAKT) are cytoplasmic. A helical transmembrane segment spans residues 259-279 (LGVTVLAFVISWLPYTVDILI). Residue Asp-280 is a topological domain, extracellular. Residues 281 to 301 (AFMGFLTPAYIYEICCWSAYY) form a helical membrane-spanning segment. The Cytoplasmic portion of the chain corresponds to 302 to 342 (NSAMNPLIYALFYPWFRKAIKLILSGDVLKASSSTISLFLE).

This sequence belongs to the G-protein coupled receptor 1 family. As to expression, expressed in kidney and amygdala. Not expressed in other tissues or brain regions tested.

It is found in the cell membrane. Olfactory receptor specific for trace amines. Trace amine compounds are enriched in animal body fluids and act on trace amine-associated receptors (TAARs) to elicit both intraspecific and interspecific innate behaviors. Ligand-binding causes a conformation change that triggers signaling via G alpha proteins, possibly G(i)/G(o) G alpha proteins. This chain is Trace amine-associated receptor 8 (TAAR8), found in Homo sapiens (Human).